A 346-amino-acid chain; its full sequence is Phosphoribosylformylglycinamidine cyclo-ligase (346 aa).

It belongs to the AIR synthase family.

It localises to the cytoplasm. The enzyme catalyses 2-formamido-N(1)-(5-O-phospho-beta-D-ribosyl)acetamidine + ATP = 5-amino-1-(5-phospho-beta-D-ribosyl)imidazole + ADP + phosphate + H(+). The protein operates within purine metabolism; IMP biosynthesis via de novo pathway; 5-amino-1-(5-phospho-D-ribosyl)imidazole from N(2)-formyl-N(1)-(5-phospho-D-ribosyl)glycinamide: step 2/2. The protein is Phosphoribosylformylglycinamidine cyclo-ligase of Bacillus cereus (strain B4264).